Consider the following 177-residue polypeptide: Large ribosomal subunit protein uL6 (177 aa).

It belongs to the universal ribosomal protein uL6 family. Part of the 50S ribosomal subunit.

Its function is as follows. This protein binds to the 23S rRNA, and is important in its secondary structure. It is located near the subunit interface in the base of the L7/L12 stalk, and near the tRNA binding site of the peptidyltransferase center. In Shewanella denitrificans (strain OS217 / ATCC BAA-1090 / DSM 15013), this protein is Large ribosomal subunit protein uL6.